The following is a 54-amino-acid chain: Large ribosomal subunit protein bL33B (54 aa).

The protein belongs to the bacterial ribosomal protein bL33 family.

The protein is Large ribosomal subunit protein bL33B of Mycobacterium sp. (strain KMS).